Consider the following 209-residue polypeptide: C-type lectin domain family 6 member A (209 aa).

Topologically, residues 1–20 are cytoplasmic; sequence MVQERHPQRKGVCWTLRLWS. The helical; Signal-anchor for type II membrane protein transmembrane segment at 21–43 threads the bilayer; the sequence is TAVISMLLLSTCFIASCMVTYQF. Residues 44–209 are Extracellular-facing; sequence TMEKPNRRLS…SICETKKIYL (166 aa). Intrachain disulfides connect C64-C78 and C79-C90. The region spanning 86–203 is the C-type lectin domain; the sequence is FGSSCYLIST…CDSKHNSICE (118 aa). Residues V116, N118, and E122 each coordinate Ca(2+). N-linked (GlcNAc...) asparagine glycosylation occurs at N131. 3 residues coordinate Ca(2+): E168, N170, and E174. Alpha-D-mannopyranose contacts are provided by residues 168-170, E174, W182, and 190-191; these read EPN and ND. C176 and C194 form a disulfide bridge. Positions 190, 191, and 203 each coordinate Ca(2+).

In terms of assembly, associated with FCER1G. Heterodimer with CLEC4D; this heterodimer forms a pattern recognition receptor (PRR) against fungal infection.

The protein resides in the cell membrane. Functionally, calcium-dependent lectin that acts as a pattern recognition receptor (PRR) of the innate immune system: specifically recognizes and binds alpha-mannans on C.albicans hypheas. Binding of C.albicans alpha-mannans to this receptor complex leads to phosphorylation of the immunoreceptor tyrosine-based activation motif (ITAM) of FCER1G, triggering activation of SYK, CARD9 and NF-kappa-B, consequently driving maturation of antigen-presenting cells and shaping antigen-specific priming of T-cells toward effector T-helper 1 and T-helper 17 cell subtypes. Also recognizes, in a mannose-dependent manner, allergens from house dust mite and fungi, by promoting cysteinyl leukotriene production. Recognizes soluble elements from the eggs of Shistosoma mansoni altering adaptive immune responses. The protein is C-type lectin domain family 6 member A (CLEC6A) of Rattus norvegicus (Rat).